The following is a 134-amino-acid chain: L-ectoine synthase (134 aa).

It belongs to the ectoine synthase family.

The enzyme catalyses (2S)-4-acetamido-2-aminobutanoate = L-ectoine + H2O. Its pathway is amine and polyamine biosynthesis; ectoine biosynthesis; L-ectoine from L-aspartate 4-semialdehyde: step 3/3. Its function is as follows. Catalyzes the circularization of gamma-N-acetyl-alpha,gamma-diaminobutyric acid (ADABA) to ectoine (1,4,5,6-tetrahydro-2-methyl-4-pyrimidine carboxylic acid), which is an excellent osmoprotectant. The polypeptide is L-ectoine synthase (Shouchella clausii (strain KSM-K16) (Alkalihalobacillus clausii)).